Consider the following 153-residue polypeptide: Transcriptional repressor NrdR (153 aa).

A zinc finger lies at 3–34 (CPYCGHPDTRVVDSRPSDEGMAIRRRRECPSC). One can recognise an ATP-cone domain in the interval 49 to 136 (LMVVKRDGRK…VYREFDSVER (88 aa)).

It belongs to the NrdR family. Requires Zn(2+) as cofactor.

In terms of biological role, negatively regulates transcription of bacterial ribonucleotide reductase nrd genes and operons by binding to NrdR-boxes. This chain is Transcriptional repressor NrdR, found in Thermus thermophilus (strain ATCC BAA-163 / DSM 7039 / HB27).